A 324-amino-acid polypeptide reads, in one-letter code: Phospho-N-acetylmuramoyl-pentapeptide-transferase (324 aa).

10 helical membrane-spanning segments follow: residues 5-25 (VMVL…PLFI), 50-70 (GTPT…TLLM), 77-97 (LSVE…LGFL), 117-137 (LIGQ…SGFS), 147-167 (LSIN…VGGS), 176-196 (LDGL…VLAW), 203-223 (IAIF…FNAH), 227-247 (VFMG…VAIL), 250-270 (LEIL…SVII), and 304-324 (VTFW…EVWI).

This sequence belongs to the glycosyltransferase 4 family. MraY subfamily. It depends on Mg(2+) as a cofactor.

It is found in the cell membrane. The catalysed reaction is UDP-N-acetyl-alpha-D-muramoyl-L-alanyl-gamma-D-glutamyl-meso-2,6-diaminopimeloyl-D-alanyl-D-alanine + di-trans,octa-cis-undecaprenyl phosphate = di-trans,octa-cis-undecaprenyl diphospho-N-acetyl-alpha-D-muramoyl-L-alanyl-D-glutamyl-meso-2,6-diaminopimeloyl-D-alanyl-D-alanine + UMP. It participates in cell wall biogenesis; peptidoglycan biosynthesis. Its function is as follows. Catalyzes the initial step of the lipid cycle reactions in the biosynthesis of the cell wall peptidoglycan: transfers peptidoglycan precursor phospho-MurNAc-pentapeptide from UDP-MurNAc-pentapeptide onto the lipid carrier undecaprenyl phosphate, yielding undecaprenyl-pyrophosphoryl-MurNAc-pentapeptide, known as lipid I. The polypeptide is Phospho-N-acetylmuramoyl-pentapeptide-transferase (Geobacillus sp. (strain WCH70)).